The chain runs to 391 residues: UDP-galactose transporter homolog 1 (391 aa).

Helical transmembrane passes span 3–23 (LLQLGVCAGSIYTTFLIWGLL), 52–72 (LFLNTVQALFSSVVACMYLLV), 126–147 (YILIAALQSTASQLGFLSLRYI), 178–198 (YKYAVVGLVTLGIWLFMAFAP), and 207–227 (APESSSLIGLVLCLLNLVLDG). Asparagine 230 is a glycosylation site (N-linked (GlcNAc...) asparagine). The next 4 membrane-spanning stretches (helical) occupy residues 250–270 (MMLVMNAISAFLMALTLTLPI), 298–318 (DIIAYALAGAVGQVSIFETLE), 323–343 (LTLVSITVTRKLFTMLLSVVV), and 347–367 (ELSKLQWLGVAVVFAGIGIEA).

Belongs to the nucleotide-sugar transporter family. SLC35B subfamily.

It is found in the endoplasmic reticulum membrane. May be involved in specific transport of UDP-Gal from the cytosol to the Golgi lumen. Involved in the maintenance of optimal conditions for the folding of secretory pathway proteins in the endoplasmic reticulum. This is UDP-galactose transporter homolog 1 (HUT1) from Mycosarcoma maydis (Corn smut fungus).